A 311-amino-acid polypeptide reads, in one-letter code: Ribosomal RNA small subunit methyltransferase H (311 aa).

S-adenosyl-L-methionine-binding positions include 39–41 (GGH), D59, F87, D102, and H109.

Belongs to the methyltransferase superfamily. RsmH family.

The protein localises to the cytoplasm. The enzyme catalyses cytidine(1402) in 16S rRNA + S-adenosyl-L-methionine = N(4)-methylcytidine(1402) in 16S rRNA + S-adenosyl-L-homocysteine + H(+). Functionally, specifically methylates the N4 position of cytidine in position 1402 (C1402) of 16S rRNA. In Porphyromonas gingivalis (strain ATCC 33277 / DSM 20709 / CIP 103683 / JCM 12257 / NCTC 11834 / 2561), this protein is Ribosomal RNA small subunit methyltransferase H.